Here is a 406-residue protein sequence, read N- to C-terminus: 3-isopropylmalate dehydrogenase, chloroplastic (406 aa).

Residues 1–34 (MAAALQTNIRPVKFPATLRALTKQSSPAPFRVRC) constitute a chloroplast transit peptide. Serine 71 is subject to Phosphoserine. 117–130 (GYKWDKNEKHLKPE) lines the NAD(+) pocket. Residues arginine 137, arginine 147, arginine 175, and aspartate 265 each coordinate substrate. Mg(2+)-binding residues include aspartate 265, aspartate 289, and aspartate 293. Residue 323–335 (GSAPDIAGQDKAN) participates in NAD(+) binding.

This sequence belongs to the isocitrate and isopropylmalate dehydrogenases family. Homodimer. Requires Mg(2+) as cofactor. Mn(2+) serves as cofactor.

The protein resides in the plastid. It localises to the chloroplast. The enzyme catalyses (2R,3S)-3-isopropylmalate + NAD(+) = 4-methyl-2-oxopentanoate + CO2 + NADH. It functions in the pathway amino-acid biosynthesis; L-leucine biosynthesis; L-leucine from 3-methyl-2-oxobutanoate: step 3/4. Its function is as follows. Catalyzes the oxidation of 3-carboxy-2-hydroxy-4-methylpentanoate (3-isopropylmalate) to 3-carboxy-4-methyl-2-oxopentanoate. The product decarboxylates to 4-methyl-2 oxopentanoate. This is 3-isopropylmalate dehydrogenase, chloroplastic from Brassica napus (Rape).